The chain runs to 374 residues: Anhydro-N-acetylmuramic acid kinase (374 aa).

ATP is bound at residue Gly-12–Asp-19.

Belongs to the anhydro-N-acetylmuramic acid kinase family.

The catalysed reaction is 1,6-anhydro-N-acetyl-beta-muramate + ATP + H2O = N-acetyl-D-muramate 6-phosphate + ADP + H(+). The protein operates within amino-sugar metabolism; 1,6-anhydro-N-acetylmuramate degradation. Its pathway is cell wall biogenesis; peptidoglycan recycling. Catalyzes the specific phosphorylation of 1,6-anhydro-N-acetylmuramic acid (anhMurNAc) with the simultaneous cleavage of the 1,6-anhydro ring, generating MurNAc-6-P. Is required for the utilization of anhMurNAc either imported from the medium or derived from its own cell wall murein, and thus plays a role in cell wall recycling. This is Anhydro-N-acetylmuramic acid kinase from Klebsiella pneumoniae subsp. pneumoniae (strain ATCC 700721 / MGH 78578).